The chain runs to 282 residues: Ribosomal RNA small subunit methyltransferase I (282 aa).

This sequence belongs to the methyltransferase superfamily. RsmI family.

It is found in the cytoplasm. The catalysed reaction is cytidine(1402) in 16S rRNA + S-adenosyl-L-methionine = 2'-O-methylcytidine(1402) in 16S rRNA + S-adenosyl-L-homocysteine + H(+). Functionally, catalyzes the 2'-O-methylation of the ribose of cytidine 1402 (C1402) in 16S rRNA. This Buchnera aphidicola subsp. Acyrthosiphon pisum (strain APS) (Acyrthosiphon pisum symbiotic bacterium) protein is Ribosomal RNA small subunit methyltransferase I.